A 38-amino-acid polypeptide reads, in one-letter code: DDRRSPLEECFQQNDYEEFLEIAKNGLKKTXNPKHVXV.

The protein belongs to the flavin monoamine oxidase family. FIG1 subfamily. Homodimer; non-covalently linked. FAD serves as cofactor. N-glycosylated. Expressed by the venom gland.

It localises to the secreted. It catalyses the reaction an L-alpha-amino acid + O2 + H2O = a 2-oxocarboxylate + H2O2 + NH4(+). The enzyme catalyses L-leucine + O2 + H2O = 4-methyl-2-oxopentanoate + H2O2 + NH4(+). It carries out the reaction L-phenylalanine + O2 + H2O = 3-phenylpyruvate + H2O2 + NH4(+). The catalysed reaction is L-tryptophan + O2 + H2O = indole-3-pyruvate + H2O2 + NH4(+). It catalyses the reaction L-methionine + O2 + H2O = 4-methylsulfanyl-2-oxobutanoate + H2O2 + NH4(+). The enzyme catalyses L-arginine + O2 + H2O = 5-guanidino-2-oxopentanoate + H2O2 + NH4(+). It carries out the reaction L-2-aminohexanoate + O2 + H2O = 2-oxohexanoate + H2O2 + NH4(+). The catalysed reaction is L-2-aminopentanoate + O2 + H2O = 2-oxopentanoate + H2O2 + NH4(+). It catalyses the reaction L-tyrosine + O2 + H2O = 3-(4-hydroxyphenyl)pyruvate + H2O2 + NH4(+). Its function is as follows. Catalyzes an oxidative deamination of predominantly hydrophobic and aromatic L-amino acids, thus producing hydrogen peroxide that may contribute to the diverse toxic effects of this enzyme. Is very active against L-Phe and L-Tyr, moderately active against L-Trp, L-Met, L-Leu, L-norleucine (L-2-aminohexanoate), L-Arg and L-norvaline (L-2-aminopentanoate), and slightly active against L-His, L-cystine, and L-Ile. L-Gln, L-Lys, L-Asn, L-ornithine, L-Ala and L-Val are oxidized very slowly. Exhibits diverse biological activities, such as hemorrhage, hemolysis, edema, apoptosis of vascular endothelial cells or tumor cell lines, antibacterial and antiparasitic activities. This protein inhibits both agonist- and shear stress-induced platelet aggregation (SIPA). Effects of snake L-amino oxidases on platelets are controversial, since they either induce aggregation or inhibit agonist-induced aggregation. These different effects are probably due to different experimental conditions. The polypeptide is L-amino-acid oxidase (Naja kaouthia (Monocled cobra)).